Here is a 504-residue protein sequence, read N- to C-terminus: MCGIVGIVSQSPVNQSIYDALTLLQHRGQDAAGIVTVDDENRFRLRKANGLVSDVFEQVHMLRLQGNAGIGHVRYPTAGSSSVSEAQPFYVNSPYGLTLVHNGNLTNSSELKEKLFRRARRHVNTNSDSELLLNILANHLDHFEKYQLDPQDVFSAVKQTHQDIRGAYACIAMIIGHGMVAFRDPNGIRPLVLGKREENGKTEYMFASESIALDTVGFEFVRDVQPGEAIYVTFEGEMYAQQCADKPTLTPCIFEYVYFARPDSCIDGVSVYAARVHMGQRLGEKIAREWADVDDIDVVIPVPETSNDIALRIARVLNKPYRQGFVKNRYVGRTFIMPGQALRVSSVRRKLNTIASEFKDKNVLLVDDSIVRGTTSEQIVEMARAAGAKKIYFASAAPEIRYPNVYGIDMPTKNELIAYGRDVDEIAKLIGVDKLIFQDLDALTGSVQQENPSIQDFDCSVFTGVYVTGDITPEYLDNIAEQRNDIAKKKREKDATNLEMHNEK.

Residue cysteine 2 is the Nucleophile of the active site. One can recognise a Glutamine amidotransferase type-2 domain in the interval 2 to 235 (CGIVGIVSQS…PGEAIYVTFE (234 aa)). Residues threonine 305, aspartate 367, and aspartate 368 each contribute to the Mg(2+) site.

It in the C-terminal section; belongs to the purine/pyrimidine phosphoribosyltransferase family. Requires Mg(2+) as cofactor.

It carries out the reaction 5-phospho-beta-D-ribosylamine + L-glutamate + diphosphate = 5-phospho-alpha-D-ribose 1-diphosphate + L-glutamine + H2O. Its pathway is purine metabolism; IMP biosynthesis via de novo pathway; N(1)-(5-phospho-D-ribosyl)glycinamide from 5-phospho-alpha-D-ribose 1-diphosphate: step 1/2. Its function is as follows. Catalyzes the formation of phosphoribosylamine from phosphoribosylpyrophosphate (PRPP) and glutamine. The polypeptide is Amidophosphoribosyltransferase (Pasteurella multocida (strain Pm70)).